The primary structure comprises 356 residues: Phosphoribosylformylglycinamidine cyclo-ligase (356 aa).

It belongs to the AIR synthase family.

It localises to the cytoplasm. The catalysed reaction is 2-formamido-N(1)-(5-O-phospho-beta-D-ribosyl)acetamidine + ATP = 5-amino-1-(5-phospho-beta-D-ribosyl)imidazole + ADP + phosphate + H(+). The protein operates within purine metabolism; IMP biosynthesis via de novo pathway; 5-amino-1-(5-phospho-D-ribosyl)imidazole from N(2)-formyl-N(1)-(5-phospho-D-ribosyl)glycinamide: step 2/2. The chain is Phosphoribosylformylglycinamidine cyclo-ligase from Acinetobacter baylyi (strain ATCC 33305 / BD413 / ADP1).